The primary structure comprises 73 residues: Protein SlyX homolog (73 aa).

Belongs to the SlyX family.

This chain is Protein SlyX homolog, found in Pasteurella multocida (strain Pm70).